Consider the following 230-residue polypeptide: 5'-methylthioadenosine/S-adenosylhomocysteine nucleosidase (230 aa).

The active-site Proton acceptor is the Glu12. Residues Gly78, Ile153, and 174–175 each bind substrate; that span reads ME. The active-site Proton donor is Asp198.

It belongs to the PNP/UDP phosphorylase family. MtnN subfamily.

The enzyme catalyses S-adenosyl-L-homocysteine + H2O = S-(5-deoxy-D-ribos-5-yl)-L-homocysteine + adenine. It carries out the reaction S-methyl-5'-thioadenosine + H2O = 5-(methylsulfanyl)-D-ribose + adenine. The catalysed reaction is 5'-deoxyadenosine + H2O = 5-deoxy-D-ribose + adenine. Its pathway is amino-acid biosynthesis; L-methionine biosynthesis via salvage pathway; S-methyl-5-thio-alpha-D-ribose 1-phosphate from S-methyl-5'-thioadenosine (hydrolase route): step 1/2. Its function is as follows. Catalyzes the irreversible cleavage of the glycosidic bond in both 5'-methylthioadenosine (MTA) and S-adenosylhomocysteine (SAH/AdoHcy) to adenine and the corresponding thioribose, 5'-methylthioribose and S-ribosylhomocysteine, respectively. Also cleaves 5'-deoxyadenosine, a toxic by-product of radical S-adenosylmethionine (SAM) enzymes, into 5-deoxyribose and adenine. This is 5'-methylthioadenosine/S-adenosylhomocysteine nucleosidase from Shewanella halifaxensis (strain HAW-EB4).